A 186-amino-acid chain; its full sequence is Glycerol-3-phosphate acyltransferase 1 (186 aa).

5 consecutive transmembrane segments (helical) span residues 9 to 29 (MQFL…AYIV), 58 to 78 (GYFV…VSIA), 85 to 105 (STFV…PVLF), 121 to 141 (IAFD…FYLI), and 161 to 181 (ILYS…VLIL).

This sequence belongs to the PlsY family. Probably interacts with PlsX.

It localises to the cell membrane. It catalyses the reaction an acyl phosphate + sn-glycerol 3-phosphate = a 1-acyl-sn-glycero-3-phosphate + phosphate. The protein operates within lipid metabolism; phospholipid metabolism. Its function is as follows. Catalyzes the transfer of an acyl group from acyl-phosphate (acyl-PO(4)) to glycerol-3-phosphate (G3P) to form lysophosphatidic acid (LPA). This enzyme utilizes acyl-phosphate as fatty acyl donor, but not acyl-CoA or acyl-ACP. The protein is Glycerol-3-phosphate acyltransferase 1 of Bacillus cereus (strain ZK / E33L).